An 842-amino-acid polypeptide reads, in one-letter code: Netrin receptor UNC5A (842 aa).

The signal sequence occupies residues 1 to 25 (MAVRPGLWPALLGIVLAAWLRGSGA). The Extracellular segment spans residues 26-306 (QQSATVANPV…ASGPEDVALY (281 aa)). Residues 44–141 (PHFLVEPEDV…SGTTKSQKAY (98 aa)) form the Ig-like domain. 3 cysteine pairs are disulfide-bonded: C65/C126, C77/C124, and C170/C221. Residues N107 and N218 are each glycosylated (N-linked (GlcNAc...) asparagine). One can recognise an Ig-like C2-type domain in the interval 155–234 (PLAKEVSLEQ…NIVARRRSAS (80 aa)). The TSP type-1 domain maps to 242–294 (DGSWSPWSKWSACGLDCTHWRSRECSDPAPRNGGEECQGTDLDTRNCTSDLCV). C-linked (Man) tryptophan glycans are attached at residues W245, W248, and W251. 3 disulfides stabilise this stretch: C254-C288, C258-C293, and C266-C278. Residue N287 is glycosylated (N-linked (GlcNAc...) asparagine). Residues 307–327 (VGLIAVAVCLVLLLLVLILVY) form a helical membrane-spanning segment. Over 328-842 (CRKKEGLDSD…GLFTVSEAEC (515 aa)) the chain is Cytoplasmic. The 144-residue stretch at 441–584 (NMTYGTFNFL…LGRFALVGEA (144 aa)) folds into the ZU5 domain. The interaction with DCC stretch occupies residues 605–623 (SLEYNIRVYCLHDTHDALK). Residues 761–841 (QKIISSLDPP…AGLFTVSEAE (81 aa)) form the Death domain.

Belongs to the unc-5 family. In terms of assembly, homodimer and homooligomer. Interacts with the cytoplasmic part of DCC. Interacts with MAGED1. Interacts with PRKCABP, possibly mediating some interaction with PKC. Interacts (via extracellular domain) with FLRT2 (via extracellular domain). Interacts (via extracellular domain) with FLRT3 (via extracellular domain). Post-translationally, phosphorylated on cytoplasmic tyrosine residues. Phosphorylated by PKC in vitro. Proteolytically cleaved by caspases during apoptosis. The cleavage does not take place when the receptor is associated with netrin ligand. Its cleavage by caspases is required to induce apoptosis. In terms of processing, the two extracellular TSRs of UNC5A contain WxxWxxWxxC motifs that can be C-mannosylated on all tryptophans. DPY19L1 preferentially mannosylates the first two tryptophans and DPY19L3 prefers the third. C-mannosylation by DPY19L1 is required for transport of UNC5A from the endoplasmic reticulum to the cell surface.

The protein resides in the cell membrane. It is found in the membrane raft. It localises to the cell projection. The protein localises to the neuron projection. Receptor for netrin required for axon guidance. Functions in the netrin signaling pathway and promotes neurite outgrowth in response to NTN1. Mediates axon repulsion of neuronal growth cones in the developing nervous system in response to netrin. Axon repulsion in growth cones may be mediated by its association with DCC that may trigger signaling for repulsion. It also acts as a dependence receptor required for apoptosis induction when not associated with netrin ligand. The polypeptide is Netrin receptor UNC5A (UNC5A) (Homo sapiens (Human)).